Here is a 239-residue protein sequence, read N- to C-terminus: MICOS complex subunit mic25a (239 aa).

A lipid anchor (N-myristoyl glycine) is attached at Gly-2. Disordered regions lie at residues Val-27–Tyr-88 and Asp-113–Lys-133. Residues Asn-50–Pro-78 are compositionally biased toward polar residues. Residues Asp-79–Tyr-88 show a composition bias toward basic and acidic residues. The stretch at Asp-79–Glu-166 forms a coiled coil. The 43-residue stretch at Glu-192–Leu-234 folds into the CHCH domain. Short sequence motifs (cx9C motif) lie at residues Cys-195–Cys-205 and Cys-216–Cys-226. 2 cysteine pairs are disulfide-bonded: Cys-195–Cys-226 and Cys-205–Cys-216.

This sequence belongs to the MICOS complex subunit Mic19 family. Metazoan Mic25 subfamily. As to quaternary structure, component of the mitochondrial contact site and cristae organizing system (MICOS) complex (also known as MINOS or MitOS complex).

The protein resides in the mitochondrion inner membrane. Functionally, component of the MICOS complex, a large protein complex of the mitochondrial inner membrane that plays crucial roles in the maintenance of crista junctions, inner membrane architecture, and formation of contact sites to the outer membrane. This chain is MICOS complex subunit mic25a (chchd6a), found in Danio rerio (Zebrafish).